The sequence spans 610 residues: DNA mismatch repair protein MutL (610 aa).

Belongs to the DNA mismatch repair MutL/HexB family.

Its function is as follows. This protein is involved in the repair of mismatches in DNA. It is required for dam-dependent methyl-directed DNA mismatch repair. May act as a 'molecular matchmaker', a protein that promotes the formation of a stable complex between two or more DNA-binding proteins in an ATP-dependent manner without itself being part of a final effector complex. The sequence is that of DNA mismatch repair protein MutL from Rickettsia conorii (strain ATCC VR-613 / Malish 7).